Reading from the N-terminus, the 121-residue chain is Large ribosomal subunit protein uL22 (121 aa).

It belongs to the universal ribosomal protein uL22 family. As to quaternary structure, part of the 50S ribosomal subunit.

Functionally, this protein binds specifically to 23S rRNA; its binding is stimulated by other ribosomal proteins, e.g. L4, L17, and L20. It is important during the early stages of 50S assembly. It makes multiple contacts with different domains of the 23S rRNA in the assembled 50S subunit and ribosome. The globular domain of the protein is located near the polypeptide exit tunnel on the outside of the subunit, while an extended beta-hairpin is found that lines the wall of the exit tunnel in the center of the 70S ribosome. The chain is Large ribosomal subunit protein uL22 from Beutenbergia cavernae (strain ATCC BAA-8 / DSM 12333 / CCUG 43141 / JCM 11478 / NBRC 16432 / NCIMB 13614 / HKI 0122).